The chain runs to 501 residues: uncharacterized protein (501 aa).

Helical transmembrane passes span Ala14–Val34, Phe73–Met93, Ile111–Phe131, Phe197–Ile217, Ile274–Gly294, Phe297–Ile317, and Phe466–Leu486.

Its subcellular location is the membrane. This is an uncharacterized protein from Dictyostelium discoideum (Social amoeba).